We begin with the raw amino-acid sequence, 158 residues long: S-ribosylhomocysteine lyase (158 aa).

Histidine 54, histidine 58, and cysteine 124 together coordinate Fe cation.

This sequence belongs to the LuxS family. Homodimer. Requires Fe cation as cofactor.

It catalyses the reaction S-(5-deoxy-D-ribos-5-yl)-L-homocysteine = (S)-4,5-dihydroxypentane-2,3-dione + L-homocysteine. In terms of biological role, involved in the synthesis of autoinducer 2 (AI-2) which is secreted by bacteria and is used to communicate both the cell density and the metabolic potential of the environment. The regulation of gene expression in response to changes in cell density is called quorum sensing. Catalyzes the transformation of S-ribosylhomocysteine (RHC) to homocysteine (HC) and 4,5-dihydroxy-2,3-pentadione (DPD). In Lactobacillus gasseri (strain ATCC 33323 / DSM 20243 / BCRC 14619 / CIP 102991 / JCM 1131 / KCTC 3163 / NCIMB 11718 / NCTC 13722 / AM63), this protein is S-ribosylhomocysteine lyase.